Reading from the N-terminus, the 428-residue chain is 47 kDa outer membrane protein (428 aa).

The signal sequence occupies residues 1-25 (MAKTSKFTQTLLASALAVVAGSASA).

The protein belongs to the OmpP1/FadL family.

The protein localises to the cell outer membrane. This chain is 47 kDa outer membrane protein, found in Pasteurella multocida (strain Pm70).